Here is a 422-residue protein sequence, read N- to C-terminus: MLTLGEDQIGRIGASSSWSRSKKLRVHRYEIPDLNVEPSLDWDGEETGEATKALSSTCLKPKDADYCLLNVPQLVYELEVEILARVPRFEYWKLKLLNKGFSRLLKSDEIFKVRRERGVVEPSVFMLSSGDTCWTMFDKGFGNCQKLPELPSDICFLHGDKESLCAGTHLIVTGKEEKSIALWRYELETSKWFKGPAMITPRILFASATCGTVVFVAGGLKIEGNGTMEVVDSVEKYDSKTKTWTLLRGMHKRRKFCSGCYLRGKFYVLGGRDENGQNLTCGESYDEKTNTWELIPDILKDMSFSSVQSPPLIAVVGDDLYSLETSANELRVYDANANSWKKLGDVPVRAKSNGGWGVAFKSLGDKLLVIGASAGPSRAETMSVYTSRPSANPANKLYWEESKRCCGVRFNHFILNCCVMIA.

The 47-residue stretch at 68-114 (LLNVPQLVYELEVEILARVPRFEYWKLKLLNKGFSRLLKSDEIFKVR) folds into the F-box domain. Kelch repeat units follow at residues 162–212 (ESLC…TCGT), 213–264 (VVFV…YLRG), 266–312 (FYVL…SPPL), 314–361 (AVVG…VAFK), and 366–412 (KLLV…RFNH).

This chain is F-box/kelch-repeat protein At3g27150, found in Arabidopsis thaliana (Mouse-ear cress).